The sequence spans 235 residues: Putative cobalt transport protein CbiM 2 (235 aa).

Transmembrane regions (helical) follow at residues 8 to 28 (LPAIWCIVWFVVSIPVVAYGV), 40 to 60 (GILPVLAVAGAFIFVLSSLKM), 74 to 94 (GIGAIIFGPAITAVLSTIVLI), 107 to 127 (TLGANVFSMGIVGPIVAYLIY), 135 to 155 (LNFYLIVFLAATLGDWATYIV), 160 to 180 (LALAFPAGDILTFGGFFSSFS), and 185 to 205 (IFAITQVPLAIVEGAVSALLF).

The protein belongs to the CbiM family. In terms of assembly, forms an energy-coupling factor (ECF) transporter complex composed of an ATP-binding protein (A component, CbiO), a transmembrane protein (T component, CbiQ) and 2 possible substrate-capture proteins (S components, CbiM and CbiN) of unknown stoichimetry.

It is found in the cell membrane. Its pathway is cofactor biosynthesis; adenosylcobalamin biosynthesis. Part of the energy-coupling factor (ECF) transporter complex CbiMNOQ involved in cobalt import. The protein is Putative cobalt transport protein CbiM 2 of Methanosarcina barkeri (strain Fusaro / DSM 804).